Consider the following 266-residue polypeptide: Energy-coupling factor transporter ATP-binding protein EcfA1 (266 aa).

An ABC transporter domain is found at 2-237; sequence IKLNNVTFRY…EKIIEIAKIA (236 aa). An ATP-binding site is contributed by 37 to 44; that stretch reads GHNGSGKS.

Belongs to the ABC transporter superfamily. Energy-coupling factor EcfA family. As to quaternary structure, forms a stable energy-coupling factor (ECF) transporter complex composed of 2 membrane-embedded substrate-binding proteins (S component), 2 ATP-binding proteins (A component) and 2 transmembrane proteins (T component).

It localises to the cell membrane. ATP-binding (A) component of a common energy-coupling factor (ECF) ABC-transporter complex. Unlike classic ABC transporters this ECF transporter provides the energy necessary to transport a number of different substrates. This is Energy-coupling factor transporter ATP-binding protein EcfA1 from Mycoplasmopsis synoviae (strain 53) (Mycoplasma synoviae).